A 443-amino-acid polypeptide reads, in one-letter code: UDP-glucuronic acid decarboxylase 4 (443 aa).

Ala2 bears the N-acetylalanine mark. Residues 2-43 lie on the Cytoplasmic side of the membrane; the sequence is ASELTNRRHEIEQPEAESYYPKPIKPWFVAIRPIRYMLREQR. Residues 44-64 form a helical; Signal-anchor for type II membrane protein membrane-spanning segment; that stretch reads LVFVLVGIAIATLGFTIFSKS. Residues 65-443 lie on the Lumenal side of the membrane; the sequence is SNHQPIPYDV…DSSTTSSSTE (379 aa). 151–176 contacts NAD(+); sequence DNFFTGRKENVMHHFNNPNFEMIRHD. Arg260 contributes to the substrate binding site. Catalysis depends on Tyr263, which acts as the Proton acceptor. 263-267 is a binding site for NAD(+); sequence YDEGK. Asn292 contacts substrate. NAD(+) is bound at residue Arg304. Substrate-binding positions include 305–309, 322–329, and 389–393; these read VVSNF, YGDGKQTR, and DPHKR.

It belongs to the NAD(P)-dependent epimerase/dehydratase family. UDP-glucuronic acid decarboxylase subfamily. The cofactor is NAD(+).

It is found in the golgi apparatus. Its subcellular location is the golgi stack membrane. The catalysed reaction is UDP-alpha-D-glucuronate + H(+) = UDP-alpha-D-xylose + CO2. It functions in the pathway nucleotide-sugar biosynthesis; UDP-alpha-D-xylose biosynthesis; UDP-alpha-D-xylose from UDP-alpha-D-glucuronate: step 1/1. In terms of biological role, catalyzes the NAD-dependent decarboxylation of UDP-glucuronic acid to UDP-xylose. Necessary for the biosynthesis of the core tetrasaccharide in glycosaminoglycan biosynthesis. This is UDP-glucuronic acid decarboxylase 4 (UXS4) from Arabidopsis thaliana (Mouse-ear cress).